Reading from the N-terminus, the 59-residue chain is Protein translocase subunit SecE (59 aa).

The chain crosses the membrane as a helical span at residues 30–50; sequence ITVITTVIFFAIFFALIDSGI.

It belongs to the SecE/SEC61-gamma family. Component of the Sec protein translocase complex. Heterotrimer consisting of SecY, SecE and SecG subunits. The heterotrimers can form oligomers, although 1 heterotrimer is thought to be able to translocate proteins. Interacts with the ribosome. Interacts with SecDF, and other proteins may be involved. Interacts with SecA.

It localises to the cell membrane. In terms of biological role, essential subunit of the Sec protein translocation channel SecYEG. Clamps together the 2 halves of SecY. May contact the channel plug during translocation. This Bacillus licheniformis protein is Protein translocase subunit SecE.